We begin with the raw amino-acid sequence, 874 residues long: Alanine--tRNA ligase (874 aa).

His-563, His-567, Cys-665, and His-669 together coordinate Zn(2+).

This sequence belongs to the class-II aminoacyl-tRNA synthetase family. Zn(2+) serves as cofactor.

The protein localises to the cytoplasm. The catalysed reaction is tRNA(Ala) + L-alanine + ATP = L-alanyl-tRNA(Ala) + AMP + diphosphate. Catalyzes the attachment of alanine to tRNA(Ala) in a two-step reaction: alanine is first activated by ATP to form Ala-AMP and then transferred to the acceptor end of tRNA(Ala). Also edits incorrectly charged Ser-tRNA(Ala) and Gly-tRNA(Ala) via its editing domain. The chain is Alanine--tRNA ligase from Actinobacillus pleuropneumoniae serotype 5b (strain L20).